The primary structure comprises 424 residues: Appressorium protein ROW1 (424 aa).

The signal sequence occupies residues 1-21 (MTKLTLTVALVSALLASGASA). Disordered stretches follow at residues 19–54 (ASAQ…WQPK), 69–90 (ANRI…GYNT), 278–304 (SGST…CSSV), and 327–398 (SSSA…TQGA). Topologically, residues 22-403 (QQPTGTGNGP…NTQGAASSAS (382 aa)) are extracellular. Residues 37-54 (TDLNRNQPTKSWTQWQPK) are compositionally biased toward polar residues. 2 stretches are compositionally biased toward low complexity: residues 295 to 304 (APSSSQCSSV) and 327 to 347 (SSSA…SASS). The segment covering 362 to 382 (SGTGSGSGSGSGSGSGSGSGS) has biased composition (gly residues). Low complexity predominate over residues 383 to 398 (SSGSSSSGSSSNTQGA). The chain crosses the membrane as a helical span at residues 404–424 (SLTISVGLAGLVAIGAAAFAL).

Its subcellular location is the cell membrane. The protein localises to the secreted. In terms of biological role, plays a role in the formation of the appressorium, a specialized infection structure with the purpose of penetrating the host surface, and is required for proper remodeling of the appressorium wall and vesicle secretion. This Mycosarcoma maydis (Corn smut fungus) protein is Appressorium protein ROW1.